The sequence spans 220 residues: Mediator of RNA polymerase II transcription subunit 19 (220 aa).

A disordered region spans residues 171–220 (AFDLDGTGKSQSGSNSGNNSKKRKNKSSGSSMATPTHSDSHEDMKRRRLE). A compositionally biased stretch (low complexity) spans 178–189 (GKSQSGSNSGNN). Positions 208–220 (SDSHEDMKRRRLE) are enriched in basic and acidic residues.

It belongs to the Mediator complex subunit 19 family. In terms of assembly, component of the Mediator complex, which is composed of at least 21 subunits that form three structurally distinct submodules. The Mediator head module contains MED6, MED8, MED11, SRB4/MED17, SRB5/MED18, ROX3/MED19, SRB2/MED20 and SRB6/MED22, the middle module contains MED1, MED4, NUT1/MED5, MED7, CSE2/MED9, NUT2/MED10, SRB7/MED21 and SOH1/MED31, and the tail module contains MED2, PGD1/MED3, RGR1/MED14, GAL11/MED15 and SIN4/MED16. The head and the middle modules interact directly with RNA polymerase II, whereas the elongated tail module interacts with gene-specific regulatory proteins.

It localises to the nucleus. Its function is as follows. Component of the Mediator complex, a coactivator involved in the regulated transcription of nearly all RNA polymerase II-dependent genes. Mediator functions as a bridge to convey information from gene-specific regulatory proteins to the basal RNA polymerase II transcription machinery. The Mediator complex, having a compact conformation in its free form, is recruited to promoters by direct interactions with regulatory proteins and serves for the assembly of a functional preinitiation complex with RNA polymerase II and the general transcription factors. The Mediator complex unfolds to an extended conformation and partially surrounds RNA polymerase II, specifically interacting with the unphosphorylated form of the C-terminal domain (CTD) of RNA polymerase II. The Mediator complex dissociates from the RNA polymerase II holoenzyme and stays at the promoter when transcriptional elongation begins. The chain is Mediator of RNA polymerase II transcription subunit 19 (ROX3) from Saccharomyces cerevisiae (strain ATCC 204508 / S288c) (Baker's yeast).